The chain runs to 705 residues: Putative membrane protein SCO0839 (705 aa).

Helical transmembrane passes span 16–36 (WLVPVLLLLVWLVVGGALGPY), 177–197 (GIDGLLLAVALITVLVILLLV), 202–222 (LLPLVIILSAVFALALSCAIV), 237–257 (VQGILSILVIGAATDYALLLT), 281–301 (SWGAVVASAATVALGLLALLL), 316–336 (IGIVCSVLSTLTFLPAVLVLL), 373–393 (IWALSLAALLACAAFAPTLSS), 529–549 (LIVPVVLAIILVILILLLRSL), 554–574 (LLVATVALNFLATLGVSALVF), 587–607 (VPLYGFVFLVALGVDYNIFLM), 627–647 (LTATGGVITSAGVVLAATFAA), and 648–668 (LGVIPLAFLLQIAFIVAFGVL).

The protein belongs to the resistance-nodulation-cell division (RND) (TC 2.A.6) family. MmpL subfamily.

It localises to the cell membrane. The polypeptide is Putative membrane protein SCO0839 (Streptomyces coelicolor (strain ATCC BAA-471 / A3(2) / M145)).